The sequence spans 398 residues: Set1 complex component swd1 (398 aa).

WD repeat units follow at residues 22 to 61, 64 to 103, 162 to 202, 247 to 295, and 296 to 336; these read LKHG…VSRV, GHTR…IVYQ, NRSK…IRSS, KFQD…KILE, and GPKE…SWSA.

Component of the Set1 complex composed of ash2, sdc1, set1, shg1, spp1, swd1, swd2 and swd3.

It localises to the nucleus. In terms of biological role, the Set1 complex specifically methylates 'Lys-4' of histone H3. The polypeptide is Set1 complex component swd1 (swd1) (Schizosaccharomyces pombe (strain 972 / ATCC 24843) (Fission yeast)).